Here is a 381-residue protein sequence, read N- to C-terminus: cAMP-dependent protein kinase type I-beta regulatory subunit (381 aa).

The tract at residues 2–136 (ASPPACPSEE…ALAKAISKNV (135 aa)) is dimerization and phosphorylation. Ser3 carries the post-translational modification Phosphoserine. At Tyr21 the chain carries 3'-nitrotyrosine. Residues 67–98 (ARQKSNSQSDSHDEEVSPTPPNPVVKARRRRG) form a disordered region. Residues Ser77 and Ser83 each carry the phosphoserine modification. Thr85 is subject to Phosphothreonine. A Pseudophosphorylation motif motif is present at residues 96-100 (RRGGV). At Arg97 the chain carries Omega-N-methylarginine. Residues 137–254 (LFAH…SKVS), Glu202, Arg211, 255–381 (ILES…SLTV), Glu326, and Arg335 contribute to the 3',5'-cyclic AMP site.

This sequence belongs to the cAMP-dependent kinase regulatory chain family. As to quaternary structure, the inactive holoenzyme is composed of two regulatory chains and two catalytic chains. Activation by cAMP releases the two active catalytic monomers and the regulatory dimer. Interacts with PRKX; regulates this cAMP-dependent protein kinase. Interacts with C2orf88/smAKAP; this interaction may target PRKAR1B to the plasma membrane. The pseudophosphorylation site binds to the substrate-binding region of the catalytic chain, resulting in the inhibition of its activity. As to expression, four types of regulatory chains are found: I-alpha, I-beta, II-alpha, and II-beta. Their expression varies among tissues and is in some cases constitutive and in others inducible.

It is found in the cell membrane. Regulatory subunit of the cAMP-dependent protein kinases involved in cAMP signaling in cells. This Homo sapiens (Human) protein is cAMP-dependent protein kinase type I-beta regulatory subunit (PRKAR1B).